Here is a 219-residue protein sequence, read N- to C-terminus: Vacuolar protein sorting-associated protein 20 homolog 1 (219 aa).

The stretch at 20 to 60 (SLKTQRRKLGQYQQKLEKVIEAEKQAARDLIREKRKDRALL) forms a coiled coil. The interval 171–219 (PEVPTKESEESEKLDLPDVPTKTPVASNAEITPAESATKTKVLEEPLPA) is disordered. The segment covering 174 to 186 (PTKESEESEKLDL) has biased composition (basic and acidic residues). A compositionally biased stretch (polar residues) spans 194–209 (PVASNAEITPAESATK).

The protein belongs to the SNF7 family. As to quaternary structure, component of the endosomal sorting required for transport complex III (ESCRT-III), composed at least of VPS2, VPS20, VPS24 and VPS32. Interacts with SKD1.

Its subcellular location is the endosome. Component of the ESCRT-III complex, which is required for multivesicular bodies (MVBs) formation and sorting of endosomal cargo proteins into MVBs. The ESCRT-III complex is probably involved in the concentration of MVB cargo. This is Vacuolar protein sorting-associated protein 20 homolog 1 (VPS20.1) from Arabidopsis thaliana (Mouse-ear cress).